Consider the following 498-residue polypeptide: ATP synthase subunit beta, chloroplastic (498 aa).

Residue 172 to 179 (GGAGVGKT) coordinates ATP.

The protein belongs to the ATPase alpha/beta chains family. In terms of assembly, F-type ATPases have 2 components, CF(1) - the catalytic core - and CF(0) - the membrane proton channel. CF(1) has five subunits: alpha(3), beta(3), gamma(1), delta(1), epsilon(1). CF(0) has four main subunits: a(1), b(1), b'(1) and c(9-12).

The protein localises to the plastid. It localises to the chloroplast thylakoid membrane. The catalysed reaction is ATP + H2O + 4 H(+)(in) = ADP + phosphate + 5 H(+)(out). Functionally, produces ATP from ADP in the presence of a proton gradient across the membrane. The catalytic sites are hosted primarily by the beta subunits. The chain is ATP synthase subunit beta, chloroplastic from Solanum bulbocastanum (Wild potato).